Here is a 409-residue protein sequence, read N- to C-terminus: Pleckstrin homology domain-containing family O member 1 (409 aa).

Residues 1–20 (MMKKNNSTKRGPQDGNHQCA) are disordered. The PH domain maps to 21–132 (PPEKVGWVRK…WINALNSAIT (112 aa)). The interval 133–193 (RAKNRVLDEV…MLTLDLIQEE (61 aa)) is interaction with capping proteins (CPs). The interaction with ATM, CKIP, IFP35 and NMI stretch occupies residues 136–308 (NRVLDEVTVE…PHAPGQLSRI (173 aa)). Disordered regions lie at residues 218–304 (LAGS…APGQ), 325–350 (EVQG…ESEQ), and 390–409 (TPDS…KSLM). 2 positions are modified to phosphoserine: Ser-227 and Ser-271. The interval 308–409 (IQDLVARKLE…QHSQYRKSLM (102 aa)) is negative regulator of AP-1 activity. Residues 331–340 (DGKRKAKEPP) show a composition bias toward basic and acidic residues. Position 342 is a phosphoserine (Ser-342). Residues 390–402 (TPDSHLRQTTQHS) are compositionally biased toward polar residues.

As to quaternary structure, heterodimer or homodimer. Interacts with CK2 and actin capping subunits (capping protein CP-alpha and CP-beta). CKIP1 and CK2 together inhibit the activity of actin capping protein at the barbed ends of actin filaments. Interacts with ATM, IFP35, JUN, JUND, NMI and PI3K. Interacts with AKT1, AKT2 and AKT3 (each isozyme of PKB), PtdIns(3,5)P2, PtdIns(4,5)P2 and PtdIns(3,4,5)P2. C-terminal fragments could be released during apoptosis via caspase-3-dependent cleavage.

It localises to the membrane. Its subcellular location is the nucleus. The protein localises to the cytoplasm. In terms of biological role, plays a role in the regulation of the actin cytoskeleton through its interactions with actin capping protein (CP). May function to target CK2 to the plasma membrane thereby serving as an adapter to facilitate the phosphorylation of CP by protein kinase 2 (CK2). Appears to target ATM to the plasma membrane. Also implicated in PI3K-regulated muscle differentiation, the regulation of AP-1 activity (plasma membrane bound AP-1 regulator that translocates to the nucleus) and the promotion of apoptosis induced by tumor necrosis factor TNF. When bound to PKB, it inhibits it probably by decreasing PKB level of phosphorylation. The chain is Pleckstrin homology domain-containing family O member 1 (PLEKHO1) from Bos taurus (Bovine).